The sequence spans 421 residues: Hydrolyase poxO (421 aa).

Ser-239 (nucleophile) is an active-site residue.

Belongs to the AB hydrolase superfamily. FUS2 hydrolase family. As to quaternary structure, homodimer.

It participates in secondary metabolite biosynthesis. In terms of biological role, hydrolyase; part of the gene cluster that mediates the biosynthesis of oxaleimides, cytotoxic compounds containing an unusual disubstituted succinimide moiety. The first step of the pathway is provided by the HR-PKS poxF that serves in a new mode of collaborative biosynthesis with the PKS-NRPS poxE, by providing the olefin containing amino acid substrate via the synthesis of an ACP-bound dec-4-enoate. The cytochrome P450 monooxygenase poxM-catalyzed oxidation at the alpha-position creates the enzyme-bound 2-hydroxydec-4-enoyl-ACP thioester, which may be prone to spontaneous hydrolysis to yield 2-hydroxydec-4-enoic acid due to increased electrophilicity of the carbonyl. 2-hydroxydec-4-enoic acid can then be further oxidized by poxM to yield the alpha-ketoacid 2-oxodec-4-enoicacid, which is reductively aminated by the aminotransferase poxL to yield (S,E)-2-aminodec-4-enoic acid. The Hybrid PKS-NRPS synthetase poxE then performs condensation between the octaketide product of its PKS modules and the amino group of (S,E)-2-aminodec-4-enoic acid which is activated and incorporated by the adenylation domain. The resulting aminoacyl product can be cyclized by the Diels-Alderase PoxQ and reductively released by the reductive (R) domain of poxE to yield an aldehyde intermediate. The released aldehyde is then substrate for a Knoevenagel condensation by the hydrolyase poxO followed by an oxidation at the 5-position of the pyrrolidone ring. The presence of the olefin from the amino acid building block allows for migration of the substituted allyl group to occur. This allylic transposition reaction takes place in a conjugate addition, semipinacol-like fashion to yield a succinimide intermediate. Iterative two-electron oxidations of the C7 methyl of the succinimide intermediate to the carboxylic acid can be catalyzed by one of two remaining cytochrome P450 monooxygenasess poxC or poxD to yield oxaleimide A. Subsequent oxidation yields the maleimide scaffold oxaleimide I. Both oxaleimide A and oxaleimide I can undergo oxidative modifications in the decalin ring to yield the series of products oxaleimides B to H. The sequence is that of Hydrolyase poxO from Penicillium oxalicum.